The chain runs to 325 residues: 26S proteasome non-ATPase regulatory subunit 7 (325 aa).

Positions Thr-8–Ile-142 constitute an MPN domain. Residues Lys-285–Ala-325 are disordered. The segment covering Ser-292–Ser-302 has biased composition (low complexity).

It belongs to the peptidase M67A family.

In terms of biological role, acts as a regulatory subunit of the 26S proteasome which is involved in the ATP-dependent degradation of ubiquitinated proteins. This Dictyostelium discoideum (Social amoeba) protein is 26S proteasome non-ATPase regulatory subunit 7 (psmD7).